Consider the following 452-residue polypeptide: AP-4 complex subunit mu-1 (452 aa).

An MHD domain is found at 184–451 (KNEVFLDVVE…LSHSDAYVIR (268 aa)).

This sequence belongs to the adaptor complexes medium subunit family. Adaptor protein complex 4 (AP-4) is a heterotetramer composed of two large adaptins (epsilon-type subunit AP4E1 and beta-type subunit AP4B1), a medium adaptin (mu-type subunit AP4M1) and a small adaptin (sigma-type AP4S1). Interacts with tyrosine-based sorting signals on the cytoplasmic tail of cargo proteins such as APP, ATG9A, LAMP2 and NAGPA. Interacts with the C-terminal domain of GRID2. Interacts with GRIA1 and GRIA2; the interaction is indirect via CACNG3. Interacts with CACNG3; CACNG3 associates GRIA1 and GRIA2 with the adaptor protein complex 4 (AP-4) to target them to the somatodendritic compartment of neurons. Interacts with HOOK1 and HOOK2; the interactions are direct, mediate the interaction between FTS-Hook-FHIP (FHF) complex and AP-4 and the perinuclear distribution of AP-4.

Its subcellular location is the golgi apparatus. The protein localises to the trans-Golgi network membrane. The protein resides in the early endosome. Functionally, component of the adaptor protein complex 4 (AP-4). Adaptor protein complexes are vesicle coat components involved both in vesicle formation and cargo selection. They control the vesicular transport of proteins in different trafficking pathways. AP-4 forms a non clathrin-associated coat on vesicles departing the trans-Golgi network (TGN) and may be involved in the targeting of proteins from the trans-Golgi network (TGN) to the endosomal-lysosomal system. It is also involved in protein sorting to the basolateral membrane in epithelial cells and the proper asymmetric localization of somatodendritic proteins in neurons. Within AP-4, the mu-type subunit AP4M1 is directly involved in the recognition and binding of tyrosine-based sorting signals found in the cytoplasmic part of cargos. The adaptor protein complex 4 (AP-4) may also recognize other types of sorting signal. This chain is AP-4 complex subunit mu-1, found in Bos taurus (Bovine).